A 373-amino-acid chain; its full sequence is tRNA-specific 2-thiouridylase MnmA (373 aa).

Residues 18-25 and leucine 44 contribute to the ATP site; that span reads AMSGGVDS. The active-site Nucleophile is the cysteine 117. Cysteine 117 and cysteine 214 are joined by a disulfide. Glycine 141 is an ATP binding site. An interaction with tRNA region spans residues 163–165; the sequence is RDQ. The active-site Cysteine persulfide intermediate is cysteine 214.

Belongs to the MnmA/TRMU family.

The protein localises to the cytoplasm. The enzyme catalyses S-sulfanyl-L-cysteinyl-[protein] + uridine(34) in tRNA + AH2 + ATP = 2-thiouridine(34) in tRNA + L-cysteinyl-[protein] + A + AMP + diphosphate + H(+). Catalyzes the 2-thiolation of uridine at the wobble position (U34) of tRNA, leading to the formation of s(2)U34. The sequence is that of tRNA-specific 2-thiouridylase MnmA from Paramagnetospirillum magneticum (strain ATCC 700264 / AMB-1) (Magnetospirillum magneticum).